Here is a 465-residue protein sequence, read N- to C-terminus: Ribulose bisphosphate carboxylase large chain (465 aa).

Lysine 4 carries the post-translational modification N6,N6,N6-trimethyllysine. Asparagine 113 and threonine 163 together coordinate substrate. Lysine 165 functions as the Proton acceptor in the catalytic mechanism. Position 167 (lysine 167) interacts with substrate. The Mg(2+) site is built by lysine 191, aspartate 193, and glutamate 194. The residue at position 191 (lysine 191) is an N6-carboxylysine. Histidine 284 acts as the Proton acceptor in catalysis. Arginine 285, histidine 317, and serine 369 together coordinate substrate.

This sequence belongs to the RuBisCO large chain family. Type I subfamily. Heterohexadecamer of 8 large chains and 8 small chains; disulfide-linked. The disulfide link is formed within the large subunit homodimers. Mg(2+) serves as cofactor. Post-translationally, the disulfide bond which can form in the large chain dimeric partners within the hexadecamer appears to be associated with oxidative stress and protein turnover.

The protein resides in the plastid. It localises to the chloroplast. The catalysed reaction is 2 (2R)-3-phosphoglycerate + 2 H(+) = D-ribulose 1,5-bisphosphate + CO2 + H2O. It carries out the reaction D-ribulose 1,5-bisphosphate + O2 = 2-phosphoglycolate + (2R)-3-phosphoglycerate + 2 H(+). In terms of biological role, ruBisCO catalyzes two reactions: the carboxylation of D-ribulose 1,5-bisphosphate, the primary event in carbon dioxide fixation, as well as the oxidative fragmentation of the pentose substrate in the photorespiration process. Both reactions occur simultaneously and in competition at the same active site. This is Ribulose bisphosphate carboxylase large chain from Manilkara zapota (Sapodilla plum).